We begin with the raw amino-acid sequence, 145 residues long: Transcriptional regulator SlyA (145 aa).

One can recognise an HTH marR-type domain in the interval 2–135 (ELPLGSDLAR…LALLVARLEK (134 aa)). A DNA-binding region (H-T-H motif) is located at residues 49 to 72 (QIQLAKAIGIEQPSLVRTLDQLEE).

Belongs to the SlyA family. In terms of assembly, homodimer.

Transcription regulator that can specifically activate or repress expression of target genes. In Pectobacterium atrosepticum (strain SCRI 1043 / ATCC BAA-672) (Erwinia carotovora subsp. atroseptica), this protein is Transcriptional regulator SlyA.